The chain runs to 218 residues: Thiamine-phosphate synthase (218 aa).

4-amino-2-methyl-5-(diphosphooxymethyl)pyrimidine-binding positions include 43–47 and Asn78; that span reads QFRDK. 2 residues coordinate Mg(2+): Asp79 and Asp98. A 4-amino-2-methyl-5-(diphosphooxymethyl)pyrimidine-binding site is contributed by Ser117. 143–145 lines the 2-[(2R,5Z)-2-carboxy-4-methylthiazol-5(2H)-ylidene]ethyl phosphate pocket; that stretch reads TNS. Lys146 is a binding site for 4-amino-2-methyl-5-(diphosphooxymethyl)pyrimidine. Residues Gly174 and 194–195 each bind 2-[(2R,5Z)-2-carboxy-4-methylthiazol-5(2H)-ylidene]ethyl phosphate; that span reads IS.

It belongs to the thiamine-phosphate synthase family. It depends on Mg(2+) as a cofactor.

It carries out the reaction 2-[(2R,5Z)-2-carboxy-4-methylthiazol-5(2H)-ylidene]ethyl phosphate + 4-amino-2-methyl-5-(diphosphooxymethyl)pyrimidine + 2 H(+) = thiamine phosphate + CO2 + diphosphate. The enzyme catalyses 2-(2-carboxy-4-methylthiazol-5-yl)ethyl phosphate + 4-amino-2-methyl-5-(diphosphooxymethyl)pyrimidine + 2 H(+) = thiamine phosphate + CO2 + diphosphate. It catalyses the reaction 4-methyl-5-(2-phosphooxyethyl)-thiazole + 4-amino-2-methyl-5-(diphosphooxymethyl)pyrimidine + H(+) = thiamine phosphate + diphosphate. It participates in cofactor biosynthesis; thiamine diphosphate biosynthesis; thiamine phosphate from 4-amino-2-methyl-5-diphosphomethylpyrimidine and 4-methyl-5-(2-phosphoethyl)-thiazole: step 1/1. Its function is as follows. Condenses 4-methyl-5-(beta-hydroxyethyl)thiazole monophosphate (THZ-P) and 2-methyl-4-amino-5-hydroxymethyl pyrimidine pyrophosphate (HMP-PP) to form thiamine monophosphate (TMP). This is Thiamine-phosphate synthase from Lactococcus lactis subsp. cremoris (strain SK11).